A 154-amino-acid chain; its full sequence is Myoglobin (154 aa).

The Globin domain occupies 2–148 (GLSDGEWQQV…FRNDIAAKYK (147 aa)). The residue at position 4 (Ser4) is a Phosphoserine. Residue His65 coordinates nitrite. His65 serves as a coordination point for O2. His94 contributes to the heme b binding site.

It belongs to the globin family. Monomeric.

The protein localises to the cytoplasm. Its subcellular location is the sarcoplasm. The catalysed reaction is Fe(III)-heme b-[protein] + nitric oxide + H2O = Fe(II)-heme b-[protein] + nitrite + 2 H(+). It carries out the reaction H2O2 + AH2 = A + 2 H2O. Functionally, monomeric heme protein which primary function is to store oxygen and facilitate its diffusion within muscle tissues. Reversibly binds oxygen through a pentacoordinated heme iron and enables its timely and efficient release as needed during periods of heightened demand. Depending on the oxidative conditions of tissues and cells, and in addition to its ability to bind oxygen, it also has a nitrite reductase activity whereby it regulates the production of bioactive nitric oxide. Under stress conditions, like hypoxia and anoxia, it also protects cells against reactive oxygen species thanks to its pseudoperoxidase activity. This Equus quagga burchellii (Burchell's zebra) protein is Myoglobin (MB).